Consider the following 153-residue polypeptide: Transcriptional repressor NrdR (153 aa).

Residues 3 to 34 fold into a zinc finger; it reads CPFCHNQDTRVIDSRAAEEGTAIRRRRSCPAC. Residues 46-136 form the ATP-cone domain; sequence LMVTKRSGAT…VYRSFESLED (91 aa).

This sequence belongs to the NrdR family. The cofactor is Zn(2+).

Its function is as follows. Negatively regulates transcription of bacterial ribonucleotide reductase nrd genes and operons by binding to NrdR-boxes. This is Transcriptional repressor NrdR from Thermobifida fusca (strain YX).